A 972-amino-acid chain; its full sequence is Isoleucine--tRNA ligase (972 aa).

The short motif at 63-73 (PYANGNIHIGH) is the 'HIGH' region element. Glutamate 603 contacts L-isoleucyl-5'-AMP. The short motif at 644–648 (KMSKS) is the 'KMSKS' region element. Position 647 (lysine 647) interacts with ATP.

Belongs to the class-I aminoacyl-tRNA synthetase family. IleS type 1 subfamily. Monomer.

It localises to the cytoplasm. It catalyses the reaction tRNA(Ile) + L-isoleucine + ATP = L-isoleucyl-tRNA(Ile) + AMP + diphosphate. In terms of biological role, catalyzes the attachment of isoleucine to tRNA(Ile). As IleRS can inadvertently accommodate and process structurally similar amino acids such as valine, to avoid such errors it has two additional distinct tRNA(Ile)-dependent editing activities. One activity is designated as 'pretransfer' editing and involves the hydrolysis of activated Val-AMP. The other activity is designated 'posttransfer' editing and involves deacylation of mischarged Val-tRNA(Ile). In Brucella suis biovar 1 (strain 1330), this protein is Isoleucine--tRNA ligase.